The following is a 141-amino-acid chain: Terrelysin (141 aa).

Belongs to the aegerolysin family.

Its subcellular location is the cytoplasm. Its function is as follows. Hemolysins are potential virulence factors. Has hemolytic activity against sheep erythrocytes in vitro. The protein is Terrelysin of Aspergillus terreus (strain NIH 2624 / FGSC A1156).